Reading from the N-terminus, the 513-residue chain is ATP synthase subunit alpha (513 aa).

Residue 169 to 176 (GDRQIGKT) participates in ATP binding.

This sequence belongs to the ATPase alpha/beta chains family. F-type ATPases have 2 components, CF(1) - the catalytic core - and CF(0) - the membrane proton channel. CF(1) has five subunits: alpha(3), beta(3), gamma(1), delta(1), epsilon(1). CF(0) has three main subunits: a(1), b(2) and c(9-12). The alpha and beta chains form an alternating ring which encloses part of the gamma chain. CF(1) is attached to CF(0) by a central stalk formed by the gamma and epsilon chains, while a peripheral stalk is formed by the delta and b chains.

The protein resides in the cell inner membrane. It carries out the reaction ATP + H2O + 4 H(+)(in) = ADP + phosphate + 5 H(+)(out). Functionally, produces ATP from ADP in the presence of a proton gradient across the membrane. The alpha chain is a regulatory subunit. The protein is ATP synthase subunit alpha of Francisella tularensis subsp. tularensis (strain SCHU S4 / Schu 4).